The primary structure comprises 183 residues: ATP synthase subunit delta (183 aa).

It belongs to the ATPase delta chain family. As to quaternary structure, F-type ATPases have 2 components, F(1) - the catalytic core - and F(0) - the membrane proton channel. F(1) has five subunits: alpha(3), beta(3), gamma(1), delta(1), epsilon(1). F(0) has three main subunits: a(1), b(2) and c(10-14). The alpha and beta chains form an alternating ring which encloses part of the gamma chain. F(1) is attached to F(0) by a central stalk formed by the gamma and epsilon chains, while a peripheral stalk is formed by the delta and b chains.

It localises to the cell inner membrane. Functionally, f(1)F(0) ATP synthase produces ATP from ADP in the presence of a proton or sodium gradient. F-type ATPases consist of two structural domains, F(1) containing the extramembraneous catalytic core and F(0) containing the membrane proton channel, linked together by a central stalk and a peripheral stalk. During catalysis, ATP synthesis in the catalytic domain of F(1) is coupled via a rotary mechanism of the central stalk subunits to proton translocation. In terms of biological role, this protein is part of the stalk that links CF(0) to CF(1). It either transmits conformational changes from CF(0) to CF(1) or is implicated in proton conduction. This is ATP synthase subunit delta from Desulfovibrio desulfuricans (strain ATCC 27774 / DSM 6949 / MB).